The sequence spans 206 residues: Glutathione S-transferase 1 (206 aa).

A GST N-terminal domain is found at 2–79; that stretch reads PQYKLTYFDI…YLGRQFGLAG (78 aa). Glutathione-binding positions include tyrosine 8, tryptophan 39, lysine 43, 49 to 51, and 63 to 64; these read GQL and QS. In terms of domain architecture, GST C-terminal spans 81 to 206; the sequence is TPMEEAQVDS…WIAERPKTPY (126 aa).

It belongs to the GST superfamily. Sigma family.

The enzyme catalyses RX + glutathione = an S-substituted glutathione + a halide anion + H(+). Its function is as follows. Conjugation of reduced glutathione to a wide number of exogenous and endogenous hydrophobic electrophiles. Can also function as a GSH peroxidase. The polypeptide is Glutathione S-transferase 1 (GST1) (Ascaris suum (Pig roundworm)).